We begin with the raw amino-acid sequence, 494 residues long: NADH-ubiquinone oxidoreductase chain 4 (494 aa).

14 helical membrane-spanning segments follow: residues 6–26 (IMIY…LLIY), 41–61 (TIGL…FILF), 87–107 (IDGI…ISLV), 118–138 (VLSF…VFLV), 141–161 (ILLF…LIGL), 172–192 (FYLF…IITM), 207–227 (ANFS…SFAV), 246–266 (PLAG…YGIF), 280–300 (YTYI…FSTL), 302–322 (TIAI…VYLL), 336–356 (IALG…VGGI), 375–395 (LMPI…GSPL), 415–435 (VLGV…IFMF), and 460–480 (FILL…PAVI).

It belongs to the complex I subunit 4 family.

The protein resides in the mitochondrion membrane. It carries out the reaction a ubiquinone + NADH + 5 H(+)(in) = a ubiquinol + NAD(+) + 4 H(+)(out). Its function is as follows. Core subunit of the mitochondrial membrane respiratory chain NADH dehydrogenase (Complex I) that is believed to belong to the minimal assembly required for catalysis. Complex I functions in the transfer of electrons from NADH to the respiratory chain. The immediate electron acceptor for the enzyme is believed to be ubiquinone. This Trichophyton rubrum (Athlete's foot fungus) protein is NADH-ubiquinone oxidoreductase chain 4 (ND4).